A 216-amino-acid polypeptide reads, in one-letter code: Probable flavin-dependent thymidylate synthase (216 aa).

Residues 1 to 216 (MSAKLISVTK…PSIAKALDWV (216 aa)) enclose the ThyX domain. FAD-binding positions include Ser55, 78–80 (RHR), and Glu86. Residues 75-78 (QVLR), 86-90 (EFSQR), and Arg155 each bind dUMP. The ThyX motif signature appears at 78–88 (RHRSFHFQEFS). FAD is bound at residue His177. A dUMP-binding site is contributed by Arg182. Arg182 functions as the Involved in ionization of N3 of dUMP, leading to its activation in the catalytic mechanism.

It belongs to the thymidylate synthase ThyX family. As to quaternary structure, homotetramer. FAD is required as a cofactor.

It catalyses the reaction dUMP + (6R)-5,10-methylene-5,6,7,8-tetrahydrofolate + NADPH + H(+) = dTMP + (6S)-5,6,7,8-tetrahydrofolate + NADP(+). The protein operates within pyrimidine metabolism; dTTP biosynthesis. Functionally, catalyzes the reductive methylation of 2'-deoxyuridine-5'-monophosphate (dUMP) to 2'-deoxythymidine-5'-monophosphate (dTMP) while utilizing 5,10-methylenetetrahydrofolate (mTHF) as the methyl donor, and NADPH and FADH(2) as the reductant. This chain is Probable flavin-dependent thymidylate synthase, found in Paramecium bursaria Chlorella virus 1 (PBCV-1).